The chain runs to 218 residues: Thiopurine S-methyltransferase (218 aa).

S-adenosyl-L-methionine contacts are provided by Trp10, Leu45, Glu66, and Arg123.

It belongs to the class I-like SAM-binding methyltransferase superfamily. TPMT family.

It localises to the cytoplasm. It carries out the reaction S-adenosyl-L-methionine + a thiopurine = S-adenosyl-L-homocysteine + a thiopurine S-methylether.. The protein is Thiopurine S-methyltransferase of Pseudomonas aeruginosa (strain UCBPP-PA14).